Here is a 309-residue protein sequence, read N- to C-terminus: Porphobilinogen deaminase (309 aa).

Cys-241 bears the S-(dipyrrolylmethanemethyl)cysteine mark.

It belongs to the HMBS family. In terms of assembly, monomer. Dipyrromethane serves as cofactor.

The catalysed reaction is 4 porphobilinogen + H2O = hydroxymethylbilane + 4 NH4(+). Its pathway is porphyrin-containing compound metabolism; protoporphyrin-IX biosynthesis; coproporphyrinogen-III from 5-aminolevulinate: step 2/4. In terms of biological role, tetrapolymerization of the monopyrrole PBG into the hydroxymethylbilane pre-uroporphyrinogen in several discrete steps. This Bacillus thuringiensis subsp. konkukian (strain 97-27) protein is Porphobilinogen deaminase.